We begin with the raw amino-acid sequence, 209 residues long: ATP-dependent Clp protease proteolytic subunit (209 aa).

Serine 101 functions as the Nucleophile in the catalytic mechanism. Residue histidine 126 is part of the active site.

The protein belongs to the peptidase S14 family. In terms of assembly, component of the chloroplastic Clp protease core complex.

It localises to the plastid. Its subcellular location is the chloroplast stroma. It carries out the reaction Hydrolysis of proteins to small peptides in the presence of ATP and magnesium. alpha-casein is the usual test substrate. In the absence of ATP, only oligopeptides shorter than five residues are hydrolyzed (such as succinyl-Leu-Tyr-|-NHMec, and Leu-Tyr-Leu-|-Tyr-Trp, in which cleavage of the -Tyr-|-Leu- and -Tyr-|-Trp bonds also occurs).. Cleaves peptides in various proteins in a process that requires ATP hydrolysis. Has a chymotrypsin-like activity. Plays a major role in the degradation of misfolded proteins. The sequence is that of ATP-dependent Clp protease proteolytic subunit from Huperzia lucidula (Shining clubmoss).